Reading from the N-terminus, the 89-residue chain is Conotoxin Bu5 (89 aa).

The N-terminal stretch at M1–A22 is a signal peptide. Residues E23–K49 constitute a propeptide that is removed on maturation. 3 cysteine pairs are disulfide-bonded: C51–C66, C58–C70, and C65–C79. At C79 the chain carries Cysteine amide. The propeptide occupies G80–R89.

It belongs to the conotoxin O1 superfamily. In terms of tissue distribution, expressed by the venom duct.

The protein resides in the secreted. The protein is Conotoxin Bu5 of Conus bullatus (Bubble cone).